A 227-amino-acid chain; its full sequence is DNA repair protein RecO (227 aa).

It belongs to the RecO family.

In terms of biological role, involved in DNA repair and RecF pathway recombination. The chain is DNA repair protein RecO from Pseudomonas putida (strain W619).